A 256-amino-acid chain; its full sequence is Imidazole glycerol phosphate synthase subunit HisF (256 aa).

Catalysis depends on residues Asp-12 and Asp-131.

This sequence belongs to the HisA/HisF family. Heterodimer of HisH and HisF.

The protein localises to the cytoplasm. It catalyses the reaction 5-[(5-phospho-1-deoxy-D-ribulos-1-ylimino)methylamino]-1-(5-phospho-beta-D-ribosyl)imidazole-4-carboxamide + L-glutamine = D-erythro-1-(imidazol-4-yl)glycerol 3-phosphate + 5-amino-1-(5-phospho-beta-D-ribosyl)imidazole-4-carboxamide + L-glutamate + H(+). The protein operates within amino-acid biosynthesis; L-histidine biosynthesis; L-histidine from 5-phospho-alpha-D-ribose 1-diphosphate: step 5/9. Its function is as follows. IGPS catalyzes the conversion of PRFAR and glutamine to IGP, AICAR and glutamate. The HisF subunit catalyzes the cyclization activity that produces IGP and AICAR from PRFAR using the ammonia provided by the HisH subunit. The sequence is that of Imidazole glycerol phosphate synthase subunit HisF from Renibacterium salmoninarum (strain ATCC 33209 / DSM 20767 / JCM 11484 / NBRC 15589 / NCIMB 2235).